We begin with the raw amino-acid sequence, 170 residues long: Peptide deformylase (170 aa).

Residues cysteine 91 and histidine 133 each coordinate Fe cation. The active site involves glutamate 134. Histidine 137 serves as a coordination point for Fe cation.

Belongs to the polypeptide deformylase family. Fe(2+) is required as a cofactor.

It catalyses the reaction N-terminal N-formyl-L-methionyl-[peptide] + H2O = N-terminal L-methionyl-[peptide] + formate. Its function is as follows. Removes the formyl group from the N-terminal Met of newly synthesized proteins. Requires at least a dipeptide for an efficient rate of reaction. N-terminal L-methionine is a prerequisite for activity but the enzyme has broad specificity at other positions. This is Peptide deformylase from Histophilus somni (strain 129Pt) (Haemophilus somnus).